We begin with the raw amino-acid sequence, 264 residues long: Phosphonoacetaldehyde hydrolase (264 aa).

Asp9 serves as the catalytic Nucleophile. Residues Asp9 and Ala11 each coordinate Mg(2+). Lys50 (schiff-base intermediate with substrate) is an active-site residue. A Mg(2+)-binding site is contributed by Asp183.

This sequence belongs to the HAD-like hydrolase superfamily. PhnX family. In terms of assembly, homodimer. Mg(2+) serves as cofactor.

The catalysed reaction is phosphonoacetaldehyde + H2O = acetaldehyde + phosphate + H(+). Its function is as follows. Involved in phosphonate degradation. This Bacillus cereus (strain G9842) protein is Phosphonoacetaldehyde hydrolase.